The chain runs to 163 residues: MEQNEFGLIEKIVDLNRVAKVVKGGRRFSFSALVVVGDGNGSVGFGMGKAQEVPEALRKATERAKKGMVQVPLVDGTLPYEVLGAFGAGRVLLKPASKGTGIIAGGAVRAIMEAVGIHDVLAKAIGTNNPHNVLRATMAGLTSLRSAEYVSQLRGKKLEAPRK.

The 64-residue stretch at Leu8–Val71 folds into the S5 DRBM domain.

It belongs to the universal ribosomal protein uS5 family. In terms of assembly, part of the 30S ribosomal subunit. Contacts proteins S4 and S8.

In terms of biological role, with S4 and S12 plays an important role in translational accuracy. Located at the back of the 30S subunit body where it stabilizes the conformation of the head with respect to the body. This is Small ribosomal subunit protein uS5 from Oleidesulfovibrio alaskensis (strain ATCC BAA-1058 / DSM 17464 / G20) (Desulfovibrio alaskensis).